A 677-amino-acid chain; its full sequence is WD and tetratricopeptide repeats protein 1 (677 aa).

WD repeat units follow at residues 45–84, 88–129, 132–172, 182–222, and 265–305; these read GHSGCVNCLEWNEKGDLLASGSDDQHTIVWDPLHHKKLLS, GHTA…TIHM, DHTN…KHSE, GPMV…NHRK, and RLRV…RPYT. The residue at position 352 (serine 352) is a Phosphoserine. TPR repeat units follow at residues 361–394 and 396–431; these read LERVKQQANEAFACQQWTQAIQLYSQAVQKAPHN and MLYGNRAAAYMKRKWDGDHYDALRDCLKAISLNPCH. The tract at residues 489–509 is disordered; it reads EEKKAAGGGGGPVRLRSTSRK. Serine 511 carries the post-translational modification Phosphoserine. WD repeat units lie at residues 535-575 and 578-617; these read NTTT…LVRV and GDESIVNCLQPHPSYCFLATSGIDPVVRLWNPRPESEDLT. The disordered stretch occupies residues 655-677; the sequence is SSGGAGASDDEDSAEGQVQCRPS.

Its pathway is protein modification; protein ubiquitination. Functionally, may function as a substrate receptor for CUL4-DDB1 E3 ubiquitin-protein ligase complex. The chain is WD and tetratricopeptide repeats protein 1 (Wdtc1) from Mus musculus (Mouse).